The sequence spans 71 residues: EAGEECDCGAPANPCCDAATCKLRPGAQCAEGDCCEQCRFVKEGTVCREAKGDWNDDSCTGQSADCPRNGF.

The Disintegrin domain occupies 1 to 71; sequence EAGEECDCGA…QSADCPRNGF (71 aa). Intrachain disulfides connect cysteine 6–cysteine 21, cysteine 8–cysteine 16, cysteine 15–cysteine 38, cysteine 29–cysteine 35, cysteine 34–cysteine 59, and cysteine 47–cysteine 66. The short motif at 51-53 is the Cell attachment site; atypical (KGD) element; the sequence is KGD.

Belongs to the venom metalloproteinase (M12B) family. P-II subfamily. P-IId sub-subfamily. As to quaternary structure, homodimer. In terms of tissue distribution, expressed by the venom gland.

The protein localises to the secreted. Suppress platelet aggregation induced by ADP, collagen, thrombin, and epinephrine (IC(50)=170-330 nM). Also dose-dependently inhibits the adhesion of human melanoma cells to fibrinogen but not to fibronectin. This chain is Disintegrin ussuristatin-2, found in Gloydius ussuriensis (Ussuri mamushi).